Here is a 122-residue protein sequence, read N- to C-terminus: MQDNSSHSRESASAGDDPLGIDKLTVDYDYLLYKIRDYVQSIQLDTTELCKKQNEVMVNGIIENTIDKNIAKFKELLEKCDTLENHYEMLNQLAIITDTFKERIAEAVNNYNXLKKGASKSK.

Basic and acidic residues predominate over residues 1-10 (MQDNSSHSRE). The tract at residues 1-21 (MQDNSSHSRESASAGDDPLGI) is disordered. Residues 63–95 (ENTIDKNIAKFKELLEKCDTLENHYEMLNQLAI) adopt a coiled-coil conformation.

This sequence belongs to the BLOC1S4 family. Component of the biogenesis of lysosome-related organelles complex-1 (BLOC-1) composed of at least BLI1, BLS1, CNL1, KXD1, SNN1 and VAB2.

The protein localises to the cytoplasm. Component of the biogenesis of lysosome-related organelles complex-1 (BLOC-1), a complex that is involved in endosomal cargo sorting. This Saccharomyces cerevisiae (strain Lalvin QA23) (Baker's yeast) protein is Biogenesis of lysosome-related organelles complex 1 subunit CNL1 (CLN1).